A 957-amino-acid chain; its full sequence is Glycine dehydrogenase (decarboxylating) (957 aa).

An N6-(pyridoxal phosphate)lysine modification is found at K708.

Belongs to the GcvP family. As to quaternary structure, the glycine cleavage system is composed of four proteins: P, T, L and H. Pyridoxal 5'-phosphate serves as cofactor.

It carries out the reaction N(6)-[(R)-lipoyl]-L-lysyl-[glycine-cleavage complex H protein] + glycine + H(+) = N(6)-[(R)-S(8)-aminomethyldihydrolipoyl]-L-lysyl-[glycine-cleavage complex H protein] + CO2. Its function is as follows. The glycine cleavage system catalyzes the degradation of glycine. The P protein binds the alpha-amino group of glycine through its pyridoxal phosphate cofactor; CO(2) is released and the remaining methylamine moiety is then transferred to the lipoamide cofactor of the H protein. The chain is Glycine dehydrogenase (decarboxylating) from Salmonella heidelberg (strain SL476).